The sequence spans 451 residues: MGKLQSKHAAAARKRRESPEGDSFVASAYASGRKGAEEAERRARDKQELPNGDPKEGPFREDQCPLQVALPAEKAEGREHPGQLLSADDGERAANREGPRGPGGQRLNIDALQCDVSVEEDDRQEWTFTLYDFDNCGKVTREDMSSLMHTIYEVVDASVNHSSGSSKTLRVKLTVSPEPSSKRKEGPPAGQDREPTRCRMEGELAEEPRVADRRLSAHVRRPSTDPQPCSERGPYCVDENTERRNHYLDLAGIENYTSRFGPGSPPVQAKQEPQGRASHLQARSRSQEPDTHAVHHRRSQVLVEHVVPASEPAARALDTQPRPKGPEKQFLKSPKGSGKPPGVPASSKSGKAFSYYLPAVLPPQAPQDGHHLPQPPPPPYGHKRYRQKGREGHSPLKAPHAQPATVEHEVVRDLPPTPAGEGYAVPVIQRHEHHHHHEHHHHHHHHHFHPS.

Residues 1-108 form a disordered region; it reads MGKLQSKHAA…PRGPGGQRLN (108 aa). A lipid anchor (N-myristoyl glycine) is attached at G2. The tract at residues 2–173 is targeting to the basolateral cell membrane; sequence GKLQSKHAAA…GSSKTLRVKL (172 aa). Basic and acidic residues-rich tracts occupy residues 34-63 and 89-99; these read KGAE…REDQ and DGERAANREGP. An interaction with DVL1, DVL2 and DVL3 region spans residues 113-178; it reads QCDVSVEEDD…LRVKLTVSPE (66 aa). Residues 119 to 154 form the EF-hand domain; the sequence is EEDDRQEWTFTLYDFDNCGKVTREDMSSLMHTIYEV. Ca(2+) contacts are provided by D132, D134, K138, and D143. Disordered stretches follow at residues 162 to 237 and 256 to 408; these read SSGS…PYCV and YTSR…TVEH. Over residues 180–215 the composition is skewed to basic and acidic residues; it reads SSKRKEGPPAGQDREPTRCRMEGELAEEPRVADRRL. The segment at 300-385 is interaction with TGFA; that stretch reads QVLVEHVVPA…PPPPYGHKRY (86 aa). Residues 332-351 are compositionally biased toward low complexity; it reads KSPKGSGKPPGVPASSKSGK.

This sequence belongs to the NKD family. As to quaternary structure, interacts with DVL1, DVL2, DVL3 and PPP2R3A. Interacts with RNF25 and TGFA (via cytoplasmic domain). Ubiquitinated, leading to rapid proteasomal degradation. Interaction with TGFA interferes with RNF25 binding and protects against ubiquitination mediated by RNF25. In terms of tissue distribution, expressed in kidney, lung, pancreas and spleen.

It is found in the cell membrane. It localises to the cytoplasm. The protein localises to the cytoplasmic vesicle. Functionally, cell autonomous antagonist of the canonical Wnt signaling pathway. May activate a second Wnt signaling pathway that controls planar cell polarity. Required for processing of TGFA and for targeting of TGFA to the basolateral membrane of polarized epithelial cells. The protein is Protein naked cuticle homolog 2 (NKD2) of Homo sapiens (Human).